A 425-amino-acid polypeptide reads, in one-letter code: Enolase (425 aa).

Residue Gln-163 coordinates (2R)-2-phosphoglycerate. Glu-205 acts as the Proton donor in catalysis. Mg(2+) is bound by residues Asp-242, Glu-285, and Asp-312. Lys-337, Arg-366, Ser-367, and Lys-388 together coordinate (2R)-2-phosphoglycerate. The active-site Proton acceptor is Lys-337.

The protein belongs to the enolase family. Requires Mg(2+) as cofactor.

It is found in the cytoplasm. Its subcellular location is the secreted. The protein localises to the cell surface. It carries out the reaction (2R)-2-phosphoglycerate = phosphoenolpyruvate + H2O. It participates in carbohydrate degradation; glycolysis; pyruvate from D-glyceraldehyde 3-phosphate: step 4/5. Functionally, catalyzes the reversible conversion of 2-phosphoglycerate (2-PG) into phosphoenolpyruvate (PEP). It is essential for the degradation of carbohydrates via glycolysis. This chain is Enolase, found in Ruegeria sp. (strain TM1040) (Silicibacter sp.).